We begin with the raw amino-acid sequence, 519 residues long: MNINFSDALMLGGISLSFLLASQAIYFYFIYSPRAKKLGCAPPPIFFSFPLGIPDLIRLVNAWFHDDLLEWFTHRFEEFGRRTAFQSVAGQLWIGTIEPENIKTMLATSFKDYSLGFRYNAMYGLLGNGIFTLSGDGWKNSRALLRPQFSREQVSHLESMRTHINMMINNHFKGGQVVDAQVLYHNLTIDTATEFLFGESTNTLDPALAQQGLPGPKGLVTGEQFAEAFTSALELLSVRVMAGAAWFLVWTPKFWRSCKVCHNFIDYFVYKALATPMEKGQDADRYVFIRELTKETSDPRVIRDQALNILLAGRDTTAALLSFTTYYLGAYPEVYDELREAVIADFGSADAEPPTFEQLKQCKVLQNVIREVLRLHPNVPLNFREAIADTTFPTGGGPNGDQPIFVPKGQKVFYATYVMQRNAGIWGPDSTSFRPDRWNEPREALASGWDYIPFNGGPRICLGQQFALTEASYTLVRICQEFSRIEVLHPDVITARNVMKQRMRLPNSSSGGVITRFIR.

A run of 2 helical transmembrane segments spans residues 10 to 30 (MLGG…FYFI) and 44 to 64 (PIFF…NAWF). Cysteine 461 serves as a coordination point for heme.

The protein belongs to the cytochrome P450 family. The cofactor is heme.

Its subcellular location is the membrane. In terms of biological role, together with an NADPH cytochrome P450 the enzyme system catalyzes the terminal hydroxylation as the first step in the assimilation of alkanes and fatty acids. The polypeptide is Cytochrome P450 52E2 (CYP52E2) (Candida apicola (Yeast)).